The chain runs to 208 residues: NAD(P)H-quinone oxidoreductase subunit I (208 aa).

2 consecutive 4Fe-4S ferredoxin-type domains span residues 55–84 and 95–124; these read GRIH…VDWV and RNYS…MTEE. Residues Cys64, Cys67, Cys70, Cys74, Cys104, Cys107, Cys110, and Cys114 each contribute to the [4Fe-4S] cluster site.

This sequence belongs to the complex I 23 kDa subunit family. As to quaternary structure, NDH-1 is composed of at least 11 different subunits. [4Fe-4S] cluster serves as cofactor.

The protein resides in the cellular thylakoid membrane. It catalyses the reaction a plastoquinone + NADH + (n+1) H(+)(in) = a plastoquinol + NAD(+) + n H(+)(out). The catalysed reaction is a plastoquinone + NADPH + (n+1) H(+)(in) = a plastoquinol + NADP(+) + n H(+)(out). Functionally, NDH-1 shuttles electrons from an unknown electron donor, via FMN and iron-sulfur (Fe-S) centers, to quinones in the respiratory and/or the photosynthetic chain. The immediate electron acceptor for the enzyme in this species is believed to be plastoquinone. Couples the redox reaction to proton translocation, and thus conserves the redox energy in a proton gradient. The polypeptide is NAD(P)H-quinone oxidoreductase subunit I (Prochlorococcus marinus (strain MIT 9515)).